The chain runs to 99 residues: Citrate lyase acyl carrier protein (99 aa).

At serine 14 the chain carries O-(phosphoribosyl dephospho-coenzyme A)serine.

The protein belongs to the CitD family. As to quaternary structure, oligomer with a subunit composition of (alpha,beta,gamma)6.

The protein localises to the cytoplasm. Functionally, covalent carrier of the coenzyme of citrate lyase. The sequence is that of Citrate lyase acyl carrier protein from Edwardsiella ictaluri (strain 93-146).